Reading from the N-terminus, the 204-residue chain is Protein G1-like5 (204 aa).

2 disordered regions span residues 1–45 (MEFV…ESQK) and 157–204 (RARG…GAAA). Residues 26–39 (TGATSASAAGASPS) show a composition bias toward low complexity. The region spanning 40–167 (RYESQKRRDW…ARGVSYEKKK (128 aa)) is the ALOG domain. The Nuclear localization signal motif lies at 165–169 (KKKRK).

It belongs to the plant homeotic and developmental regulators ALOG protein family.

The protein localises to the nucleus. Probable transcription regulator that acts as a developmental regulator by promoting cell growth in response to light. This Oryza sativa subsp. japonica (Rice) protein is Protein G1-like5 (G1L5).